Reading from the N-terminus, the 215-residue chain is uncharacterized protein (215 aa).

The first 17 residues, 1-17, serve as a signal peptide directing secretion; sequence MKKVLASATILSLMLVG. A disordered region spans residues 17-110; the sequence is GCSNGGNDES…NKQQQSVQDN (94 aa). Cys18 carries the N-palmitoyl cysteine lipid modification. The S-diacylglycerol cysteine moiety is linked to residue Cys18. Basic and acidic residues predominate over residues 25–62; the sequence is ESSHKDDSSKTEQKDKSSSQHDSKKDSKRNDTNNKQDN. Low complexity-rich tracts occupy residues 63 to 76 and 91 to 110; these read QENN…NNQN and NSNG…VQDN.

The protein resides in the cell membrane. This is an uncharacterized protein from Staphylococcus epidermidis (strain ATCC 35984 / DSM 28319 / BCRC 17069 / CCUG 31568 / BM 3577 / RP62A).